The sequence spans 271 residues: Aquaporin-2 (271 aa).

The Cytoplasmic segment spans residues 1–11; sequence MWELRSIAFSR. Residues 12 to 32 traverse the membrane as a helical segment; sequence AVLAEFLATLLFVFFGLGSAL. Topologically, residues 33–40 are extracellular; sequence QWASSPPS. The chain crosses the membrane as a helical span at residues 41–59; that stretch reads VLQIAVAFGLGIGILVQAL. The Cytoplasmic segment spans residues 60-64; it reads GHVSG. The discontinuously helical intramembrane region spans 65–74; that stretch reads AHINPAVTVA. Residues 68 to 70 carry the NPA 1 motif; it reads NPA. Residues 75–85 are Cytoplasmic-facing; it reads CLVGCHVSFLR. Residues 86–107 form a helical membrane-spanning segment; it reads AAFYVAAQLLGAVAGAAILHEI. Residues 108 to 127 are Extracellular-facing; sequence TPVEIRGDLAVNALHNNATA. Asn124 carries an N-linked (GlcNAc...) asparagine glycan. A helical membrane pass occupies residues 128–148; sequence GQAVTVELFLTMQLVLCIFAS. Residues 149–156 lie on the Cytoplasmic side of the membrane; the sequence is TDERRGDN. Residues 157–176 form a helical membrane-spanning segment; it reads LGSPALSIGFSVTLGHLLGI. Residues 177 to 180 lie on the Extracellular side of the membrane; sequence YFTG. An intramembrane region (discontinuously helical) is located at residues 181-193; it reads CSMNPARSLAPAV. The short motif at 184-186 is the NPA 2 element; sequence NPA. The Extracellular portion of the chain corresponds to 194–201; sequence VTGKFDDH. A helical membrane pass occupies residues 202 to 222; that stretch reads WVFWIGPLVGAIIGSLLYNYL. The Cytoplasmic segment spans residues 223–271; it reads LFPSAKSLQERLAVLKGLEPDTDWEEREVRRRQSVELHSPQSLPRGSKA. The interval 251–271 is disordered; that stretch reads VRRRQSVELHSPQSLPRGSKA. A phosphoserine mark is found at Ser256, Ser261, Ser264, and Ser269. Residues 261-271 show a composition bias toward polar residues; sequence SPQSLPRGSKA.

This sequence belongs to the MIP/aquaporin (TC 1.A.8) family. Homotetramer. Ser-256 phosphorylation is necessary and sufficient for expression at the apical membrane. Endocytosis is not phosphorylation-dependent. In terms of processing, N-glycosylated. As to expression, detected in kidney, in cortical and the medullary collecting tubules (at protein level). Detected in kidney medulla and cortex.

Its subcellular location is the apical cell membrane. The protein resides in the basolateral cell membrane. It is found in the cell membrane. The protein localises to the cytoplasmic vesicle membrane. It localises to the golgi apparatus. Its subcellular location is the trans-Golgi network membrane. The catalysed reaction is H2O(in) = H2O(out). It carries out the reaction glycerol(in) = glycerol(out). Its function is as follows. Forms a water-specific channel that provides the plasma membranes of renal collecting duct with high permeability to water, thereby permitting water to move in the direction of an osmotic gradient. Plays an essential role in renal water homeostasis. Could also be permeable to glycerol. The polypeptide is Aquaporin-2 (Rattus norvegicus (Rat)).